Reading from the N-terminus, the 598-residue chain is Protein unc-93 homolog B1 (598 aa).

The interval M1 to L36 is disordered. 5 helical membrane passes run V64–M84, K110–I130, F132–T152, T160–G180, and I223–L243. N-linked (GlcNAc...) asparagine glycans are attached at residues N251 and N272. The next 5 helical transmembrane spans lie at L285–G305, L343–L363, L378–W398, V403–A423, and V428–L448. An N-linked (GlcNAc...) asparagine glycan is attached at N449. A run of 2 helical transmembrane segments spans residues F469–S489 and A495–E515. A disordered region spans residues P524–Q598. Residues E544–G554 show a composition bias toward acidic residues. S547 and S550 each carry phosphoserine.

The protein belongs to the unc-93 family. As to quaternary structure, interacts with TLR3, TLR5, TLR7, TLR8, TLR9 and TLR13 (probably via transmembrane domain). Post-translationally, N-glycosylated.

Its subcellular location is the endoplasmic reticulum membrane. It localises to the endosome. The protein localises to the lysosome. It is found in the cytoplasmic vesicle. The protein resides in the phagosome. In terms of biological role, plays an important role in innate and adaptive immunity by regulating nucleotide-sensing Toll-like receptor (TLR) signaling. Required for the transport of a subset of TLRs (including TLR3, TLR7 and TLR9) from the endoplasmic reticulum to endolysosomes where they can engage pathogen nucleotides and activate signaling cascades. May play a role in autoreactive B-cells removal. This is Protein unc-93 homolog B1 from Mus musculus (Mouse).